Consider the following 372-residue polypeptide: Neutral protease 2 homolog MGYG_06241 (372 aa).

Positions 1–19 (MQFFTAIAAISALVAPALA) are cleaved as a signal peptide. Residues 20–188 (LPTQELPQAP…THFAGTLNRR (169 aa)) constitute a propeptide that is removed on maturation. 2 disulfides stabilise this stretch: Cys195–Cys264 and Cys271–Cys289. His313 is a Zn(2+) binding site. Glu314 is a catalytic residue. Residues His317 and Asp328 each contribute to the Zn(2+) site.

It belongs to the peptidase M35 family. Zn(2+) is required as a cofactor.

It localises to the secreted. It catalyses the reaction Preferential cleavage of bonds with hydrophobic residues in P1'. Also 3-Asn-|-Gln-4 and 8-Gly-|-Ser-9 bonds in insulin B chain.. Secreted metalloproteinase that allows assimilation of proteinaceous substrates. Shows high activities on basic nuclear substrates such as histone and protamine. May be involved in virulence. The chain is Neutral protease 2 homolog MGYG_06241 from Arthroderma gypseum (strain ATCC MYA-4604 / CBS 118893) (Microsporum gypseum).